Here is a 269-residue protein sequence, read N- to C-terminus: Energy-coupling factor transporter ATP-binding protein EcfA1 (269 aa).

The region spanning I8–D242 is the ABC transporter domain. G42 to S49 serves as a coordination point for ATP.

This sequence belongs to the ABC transporter superfamily. Energy-coupling factor EcfA family. As to quaternary structure, forms a stable energy-coupling factor (ECF) transporter complex composed of 2 membrane-embedded substrate-binding proteins (S component), 2 ATP-binding proteins (A component) and 2 transmembrane proteins (T component).

It localises to the cell membrane. In terms of biological role, ATP-binding (A) component of a common energy-coupling factor (ECF) ABC-transporter complex. Unlike classic ABC transporters this ECF transporter provides the energy necessary to transport a number of different substrates. This Staphylococcus aureus (strain Mu50 / ATCC 700699) protein is Energy-coupling factor transporter ATP-binding protein EcfA1.